The primary structure comprises 424 residues: Cysteate synthase (424 aa).

Residue Lys-106 is modified to N6-(pyridoxal phosphate)lysine. Pyridoxal 5'-phosphate-binding residues include Asn-132 and Thr-381.

Belongs to the threonine synthase family. Cysteate synthase subfamily. Homotrimer. Requires pyridoxal 5'-phosphate as cofactor.

The catalysed reaction is O-phospho-L-serine + sulfite + H(+) = L-cysteate + phosphate. It functions in the pathway cofactor biosynthesis; coenzyme M biosynthesis. Functionally, specifically catalyzes the beta-elimination of phosphate from L-phosphoserine and the beta-addition of sulfite to the dehydroalanine intermediate to produce L-cysteate. The chain is Cysteate synthase from Methanoregula boonei (strain DSM 21154 / JCM 14090 / 6A8).